We begin with the raw amino-acid sequence, 290 residues long: Zinc finger AN1 and C2H2 domain-containing stress-associated protein 16 (290 aa).

AN1-type zinc fingers lie at residues 7–55 (PNLG…QKDV) and 95–145 (VTKK…KPES). Zn(2+) contacts are provided by Cys13, Cys18, Cys28, Cys31, Cys36, His39, His45, Cys47, Cys101, Cys106, Cys118, Cys121, Cys126, His129, His135, and Cys137. 2 consecutive C2H2-type zinc fingers follow at residues 224–247 (EQCV…EKSH) and 261–284 (DVCP…ERDH).

In terms of biological role, may be involved in environmental stress response. This chain is Zinc finger AN1 and C2H2 domain-containing stress-associated protein 16 (SAP16), found in Oryza sativa subsp. japonica (Rice).